Consider the following 117-residue polypeptide: G antigen 12J (117 aa).

A disordered region spans residues 1-117 (MSWRGRSTYY…PEEGEKQSQC (117 aa)). Composition is skewed to acidic residues over residues 32 to 45 (FSDEVEPATPEEGE) and 87 to 96 (ECEDGPDGQE). A compositionally biased stretch (basic and acidic residues) spans 103 to 117 (EEVKTPEEGEKQSQC).

The protein belongs to the GAGE family.

This chain is G antigen 12J (GAGE12J), found in Homo sapiens (Human).